We begin with the raw amino-acid sequence, 301 residues long: D-alanine--D-alanine ligase (301 aa).

In terms of domain architecture, ATP-grasp spans 99 to 294; sequence KSVLEANGIR…FSELIDMIIQ (196 aa). 126 to 181 serves as a coordination point for ATP; the sequence is INELGYPVVVKPTHGGSSVATFIVKEEKEIENCVSEAFKWDSEVMIEKFIKGDEIT. Mg(2+) contacts are provided by aspartate 248, glutamate 261, and asparagine 263.

The protein belongs to the D-alanine--D-alanine ligase family. Requires Mg(2+) as cofactor. Mn(2+) is required as a cofactor.

The protein localises to the cytoplasm. The catalysed reaction is 2 D-alanine + ATP = D-alanyl-D-alanine + ADP + phosphate + H(+). The protein operates within cell wall biogenesis; peptidoglycan biosynthesis. Its function is as follows. Cell wall formation. The sequence is that of D-alanine--D-alanine ligase from Clostridium beijerinckii (strain ATCC 51743 / NCIMB 8052) (Clostridium acetobutylicum).